Consider the following 166-residue polypeptide: MTVPEEAQTLIGKHYRAPDHFLVGREKIREFAVAVKDDHPTHYSEPDAAAAGYPALVAPLTFLAIAGRRVQLEIFTKFNIPINIARVFHRDQKFRFHRPILANDKLYFDTYLDSVIESHGTVLAEIRSEVTDAEGKPVVTSVVTMLGEAAHHEADADATVAAIASI.

In terms of domain architecture, MaoC-like spans 8-131 (QTLIGKHYRA…VLAEIRSEVT (124 aa)).

The protein belongs to the UPF0336 family.

This is UPF0336 protein MT0525.1 from Mycobacterium tuberculosis (strain CDC 1551 / Oshkosh).